Here is a 261-residue protein sequence, read N- to C-terminus: MYKTFFFGWLAGVLLTTITGPLGLFIIWRRMSSFGDTLSHSSLLGISFAVLLNIHPFFMVIITILLFGMLIIWLNYTTVLSLDTILGIIGYSFLSLGMIIINSISNFQKNKLTNYLFGNLLEVTYIDIVILIISCVSILFVLVWYWDLMLLTTINSDLAKIDGVNVLKINSILIFLITLTIGIAIKFIGSLIAISLLIIPAATAQRFSTSPEKMAFFSVIIGIISITWGILMSVYYNLAISPTIVFCSSIVFVISNLKKIL.

7 helical membrane passes run 5-27 (FFFG…LFII), 48-70 (FAVL…FGML), 85-107 (ILGI…ISNF), 128-150 (IVIL…DLML), 172-194 (ILIF…LIAI), 215-234 (AFFS…LMSV), and 238-257 (LAIS…ISNL).

Belongs to the ABC-3 integral membrane protein family.

The protein localises to the cell membrane. Involved in the high-affinity zinc uptake transport system. This is High-affinity zinc uptake system membrane protein ZnuB (znuB) from Buchnera aphidicola subsp. Baizongia pistaciae (strain Bp).